The primary structure comprises 696 residues: Gametogenetin-binding protein 2 (696 aa).

2 positions are modified to phosphoserine: Ser-360 and Ser-602.

Interacts with isoform 1 of GGN. Testis-specific.

The protein localises to the cytoplasmic vesicle. In terms of biological role, may be involved in spermatogenesis. In Mus musculus (Mouse), this protein is Gametogenetin-binding protein 2 (Ggnbp2).